Consider the following 229-residue polypeptide: All-trans retinoic acid-induced differentiation factor (229 aa).

The N-terminal stretch at 1 to 30 (MAPHDPGSLTTLVPWAAALLLALGVERALA) is a signal peptide. Residues 31–199 (LPEICTQCPG…YKCMRQGSFS (169 aa)) lie on the Extracellular side of the membrane. 4 N-linked (GlcNAc...) asparagine glycosylation sites follow: asparagine 44, asparagine 79, asparagine 157, and asparagine 168. In terms of domain architecture, EGF-like spans 152 to 193 (QKNLCNNTGDPEMCPENGSCVPDGPGLLQCVCADGFHGYKCM). Disulfide bonds link cysteine 156-cysteine 171, cysteine 165-cysteine 181, and cysteine 183-cysteine 192. Residues 200-220 (LLMFFGILGATTLSVSILLWA) form a helical membrane-spanning segment. Residues 221–229 (TQRRKAKTS) are Cytoplasmic-facing.

In terms of assembly, interacts with NELL1; the interaction promotes osteoblastic differentiation and mineralization. Interacts with SLC37A3; the interaction is direct and both proteins are mutually dependent for their stability. In terms of tissue distribution, weakly expressed in hematopoietic cell lines.

The protein localises to the nucleus envelope. It localises to the cell membrane. The protein resides in the lysosome membrane. Its function is as follows. Promotes osteoblast cell differentiation and terminal mineralization. Plays a role in inducing the cell cycle arrest via inhibiting CCND1 expression in all-trans-retinoic acid (ATRA) signal pathway. In osteoclasts, forms a transporter complex with ATRAID for nitrogen-containing-bisphophonates (N-BPs) required for releasing N-BP molecules that have trafficked to lysosomes through fluid-phase endocytosis into the cytosol. This Homo sapiens (Human) protein is All-trans retinoic acid-induced differentiation factor.